A 360-amino-acid polypeptide reads, in one-letter code: Dihydroorotate dehydrogenase (quinone) (360 aa).

FMN is bound by residues 66–70 (AGFDK) and Thr-90. Lys-70 lines the substrate pocket. 115–119 (NRMGF) is a binding site for substrate. The FMN site is built by Asn-143 and Asn-176. Substrate is bound at residue Asn-176. Ser-179 serves as the catalytic Nucleophile. Residue Asn-181 coordinates substrate. FMN-binding residues include Lys-212 and Thr-240. 241-242 (NT) contributes to the substrate binding site. FMN-binding positions include Gly-264, Gly-293, and 314-315 (YT).

Belongs to the dihydroorotate dehydrogenase family. Type 2 subfamily. As to quaternary structure, monomer. The cofactor is FMN.

The protein localises to the cell membrane. It carries out the reaction (S)-dihydroorotate + a quinone = orotate + a quinol. Its pathway is pyrimidine metabolism; UMP biosynthesis via de novo pathway; orotate from (S)-dihydroorotate (quinone route): step 1/1. Its function is as follows. Catalyzes the conversion of dihydroorotate to orotate with quinone as electron acceptor. The protein is Dihydroorotate dehydrogenase (quinone) of Mycobacterium ulcerans (strain Agy99).